The following is a 350-amino-acid chain: Atypical chemokine receptor 4 (350 aa).

Topologically, residues methionine 1 to valine 42 are extracellular. N-linked (GlcNAc...) asparagine glycans are attached at residues asparagine 6 and asparagine 19. Residues phenylalanine 43–valine 63 traverse the membrane as a helical segment. At alanine 64–aspartate 87 the chain is on the cytoplasmic side. The chain crosses the membrane as a helical span at residues leucine 88–glycine 108. Residues lysine 109–lysine 113 are Extracellular-facing. Cysteine 112 and cysteine 184 are joined by a disulfide. A helical transmembrane segment spans residues isoleucine 114 to serine 134. Residues isoleucine 135–cysteine 154 are Cytoplasmic-facing. The helical transmembrane segment at tryptophan 155 to phenylalanine 175 threads the bilayer. The Extracellular segment spans residues tyrosine 176 to glutamine 201. The chain crosses the membrane as a helical span at residues methionine 202 to isoleucine 222. The Cytoplasmic portion of the chain corresponds to threonine 223–lysine 240. A helical transmembrane segment spans residues valine 241–phenylalanine 261. At cysteine 262–glutamate 289 the chain is on the extracellular side. A helical transmembrane segment spans residues serine 290–phenylalanine 310. The Cytoplasmic segment spans residues lysine 311 to isoleucine 350.

The protein belongs to the G-protein coupled receptor 1 family. Atypical chemokine receptor subfamily. In terms of assembly, forms heteromers with CXCR3. Interacts with ARRB1 and ARRB2. In terms of processing, the Ser/Thr residues in the C-terminal cytoplasmic tail may be phosphorylated. Predominantly expressed in heart. Lower expression in lung, pancreas, spleen, colon, skeletal muscle and small intestine.

It localises to the early endosome. The protein resides in the recycling endosome. It is found in the cell membrane. Atypical chemokine receptor that controls chemokine levels and localization via high-affinity chemokine binding that is uncoupled from classic ligand-driven signal transduction cascades, resulting instead in chemokine sequestration, degradation, or transcytosis. Also known as interceptor (internalizing receptor) or chemokine-scavenging receptor or chemokine decoy receptor. Acts as a receptor for chemokines CCL2, CCL8, CCL13, CCL19, CCL21 and CCL25. Chemokine-binding does not activate G-protein-mediated signal transduction but instead induces beta-arrestin recruitment, leading to ligand internalization. Plays an important role in controlling the migration of immune and cancer cells that express chemokine receptors CCR7 and CCR9, by reducing the availability of CCL19, CCL21, and CCL25 through internalization. Negatively regulates CXCR3-induced chemotaxis. Regulates T-cell development in the thymus. This Homo sapiens (Human) protein is Atypical chemokine receptor 4 (ACKR4).